A 93-amino-acid polypeptide reads, in one-letter code: Antitoxin EndoAI (93 aa).

The protein belongs to the MazE/EndoAI family. In terms of assembly, homodimer, forms a heterohexamer composed of alternating toxin and antitoxin homodimers which inhibits the toxin's endoribonuclease activity. Antitoxin prevents RNA binding to the endoribonuclease.

Functionally, antitoxin component of a type II toxin-antitoxin (TA) system. Antitoxin that directly inhibits activity of EndoA in vitro. Upon expression in E.coli counteracts inhibitory effect of endoribonuclease EndoA. The EndoA-EndoAI complex does not seem to bind its own promoter. The polypeptide is Antitoxin EndoAI (Bacillus subtilis (strain 168)).